We begin with the raw amino-acid sequence, 217 residues long: Phosphatidylserine decarboxylase proenzyme (217 aa).

Serine 183 functions as the Schiff-base intermediate with substrate; via pyruvic acid in the catalytic mechanism. Serine 183 carries the post-translational modification Pyruvic acid (Ser); by autocatalysis.

It belongs to the phosphatidylserine decarboxylase family. PSD-A subfamily. In terms of assembly, heterodimer of a large membrane-associated beta subunit and a small pyruvoyl-containing alpha subunit. Pyruvate serves as cofactor. In terms of processing, is synthesized initially as an inactive proenzyme. Formation of the active enzyme involves a self-maturation process in which the active site pyruvoyl group is generated from an internal serine residue via an autocatalytic post-translational modification. Two non-identical subunits are generated from the proenzyme in this reaction, and the pyruvate is formed at the N-terminus of the alpha chain, which is derived from the carboxyl end of the proenzyme. The post-translation cleavage follows an unusual pathway, termed non-hydrolytic serinolysis, in which the side chain hydroxyl group of the serine supplies its oxygen atom to form the C-terminus of the beta chain, while the remainder of the serine residue undergoes an oxidative deamination to produce ammonia and the pyruvoyl prosthetic group on the alpha chain.

The protein resides in the cell membrane. It catalyses the reaction a 1,2-diacyl-sn-glycero-3-phospho-L-serine + H(+) = a 1,2-diacyl-sn-glycero-3-phosphoethanolamine + CO2. Its pathway is phospholipid metabolism; phosphatidylethanolamine biosynthesis; phosphatidylethanolamine from CDP-diacylglycerol: step 2/2. Catalyzes the formation of phosphatidylethanolamine (PtdEtn) from phosphatidylserine (PtdSer). The sequence is that of Phosphatidylserine decarboxylase proenzyme from Cupriavidus metallidurans (strain ATCC 43123 / DSM 2839 / NBRC 102507 / CH34) (Ralstonia metallidurans).